The chain runs to 276 residues: Radial spoke head protein 9 homolog (276 aa).

It belongs to the flagellar radial spoke RSP9 family. In terms of assembly, component of the axonemal radial spoke 1 (RS1) and 2 (RS2) complexes, at least composed of spoke head proteins RSPH1, RSPH3, RSPH9 and the cilia-specific component RSPH4A or sperm-specific component RSPH6A, spoke stalk proteins RSPH14, DNAJB13, DYDC1, ROPN1L and NME5, and the RS1 complex-specific anchor protein IQUB. Interacts with IQUB. Interacts with RSPH3B. Interacts with RSPH4A. Interacts with RSPH6A. Interacts with CFAP61. Interacts with LRRC23. As to expression, expressed in the testis, trachea, lung, oviduct and ependymal cells (at protein level).

It is found in the cytoplasm. It localises to the cytoskeleton. The protein localises to the cilium axoneme. The protein resides in the flagellum axoneme. Its subcellular location is the cell projection. It is found in the kinocilium. Functionally, functions as part of axonemal radial spoke complexes that play an important part in the motility of sperm and cilia. Essential for both the radial spoke head assembly and the central pair microtubule stability in ependymal motile cilia. Required for motility of olfactory and neural cilia and for the structural integrity of ciliary axonemes in both 9+0 and 9+2 motile cilia. The polypeptide is Radial spoke head protein 9 homolog (Rsph9) (Mus musculus (Mouse)).